A 139-amino-acid polypeptide reads, in one-letter code: ATP synthase epsilon chain (139 aa).

It belongs to the ATPase epsilon chain family. In terms of assembly, F-type ATPases have 2 components, CF(1) - the catalytic core - and CF(0) - the membrane proton channel. CF(1) has five subunits: alpha(3), beta(3), gamma(1), delta(1), epsilon(1). CF(0) has three main subunits: a, b and c.

The protein localises to the cell membrane. In terms of biological role, produces ATP from ADP in the presence of a proton gradient across the membrane. The sequence is that of ATP synthase epsilon chain from Ligilactobacillus salivarius (strain UCC118) (Lactobacillus salivarius).